The following is a 198-amino-acid chain: Recombination protein RecR (198 aa).

The C4-type zinc finger occupies 57-72; sequence CSSCGHITDKDPCYIC. Residues 80 to 175 form the Toprim domain; the sequence is SIICVVQDPK…KITRIAHGLP (96 aa).

It belongs to the RecR family.

In terms of biological role, may play a role in DNA repair. It seems to be involved in an RecBC-independent recombinational process of DNA repair. It may act with RecF and RecO. The sequence is that of Recombination protein RecR from Anoxybacillus flavithermus (strain DSM 21510 / WK1).